A 265-amino-acid polypeptide reads, in one-letter code: 3-methyl-2-oxobutanoate hydroxymethyltransferase (265 aa).

Mg(2+) contacts are provided by aspartate 45 and aspartate 84. 3-methyl-2-oxobutanoate contacts are provided by residues 45–46 (DS), aspartate 84, and lysine 112. Glutamate 114 is a Mg(2+) binding site. Catalysis depends on glutamate 181, which acts as the Proton acceptor.

The protein belongs to the PanB family. Homodecamer; pentamer of dimers. Mg(2+) serves as cofactor.

It is found in the cytoplasm. The catalysed reaction is 3-methyl-2-oxobutanoate + (6R)-5,10-methylene-5,6,7,8-tetrahydrofolate + H2O = 2-dehydropantoate + (6S)-5,6,7,8-tetrahydrofolate. Its pathway is cofactor biosynthesis; (R)-pantothenate biosynthesis; (R)-pantoate from 3-methyl-2-oxobutanoate: step 1/2. In terms of biological role, catalyzes the reversible reaction in which hydroxymethyl group from 5,10-methylenetetrahydrofolate is transferred onto alpha-ketoisovalerate to form ketopantoate. The sequence is that of 3-methyl-2-oxobutanoate hydroxymethyltransferase from Pectobacterium carotovorum subsp. carotovorum (strain PC1).